The primary structure comprises 221 residues: D-glycero-alpha-D-manno-heptose 1-phosphate guanylyltransferase (221 aa).

The protein belongs to the D-alpha-D-heptose-1-P guanylyltransferase family.

The enzyme catalyses D-glycero-alpha-D-manno-heptose 1-phosphate + GTP + H(+) = GDP-D-glycero-alpha-D-manno-heptose + diphosphate. It participates in nucleotide-sugar biosynthesis; GDP-D-glycero-alpha-D-manno-heptose biosynthesis; GDP-D-glycero-alpha-D-manno-heptose from D-glycero-alpha-D-manno-heptose 7-phosphate: step 3/3. Its pathway is capsule biogenesis; capsule polysaccharide biosynthesis. In terms of biological role, catalyzes the GDP transfer from GTP to D-glycero-alpha-D-manno-heptose 1-phosphate, yielding GDP-D-alpha-D-heptose. Is able to use ATP, CTP or UTP as substrate in the presence of pyrophosphatase, but at a significantly slower rate. Can also form GDP-alpha-D-mannose from alpha-D-mannose 1-phosphate and GTP. The protein is D-glycero-alpha-D-manno-heptose 1-phosphate guanylyltransferase of Campylobacter jejuni subsp. jejuni serotype O:2 (strain ATCC 700819 / NCTC 11168).